We begin with the raw amino-acid sequence, 143 residues long: MGSRALLLLKVALPLKHQIKCLNYTKITPASELLTKRRFSIKATNGSSLQPPDVSRLAETARISLNQNEVEEFAPKIRQVIDWFGQLQAVDLNSVEPAIRADSEGENLRDDVPETFSEREAIIAAVPSYEKPYVKVPKVLNKE.

It belongs to the GatC family. Subunit of the heterotrimeric GatCAB amidotransferase (AdT) complex, composed of A, B and C subunits.

It localises to the mitochondrion. It is found in the plastid. Its subcellular location is the chloroplast. It carries out the reaction L-glutamyl-tRNA(Gln) + L-glutamine + ATP + H2O = L-glutaminyl-tRNA(Gln) + L-glutamate + ADP + phosphate + H(+). In terms of biological role, allows the formation of correctly charged Gln-tRNA(Gln) through the transamidation of misacylated Glu-tRNA(Gln) in chloroplasts and mitochondria. The reaction takes place in the presence of glutamine and ATP through an activated gamma-phospho-Glu-tRNA(Gln). This chain is Glutamyl-tRNA(Gln) amidotransferase subunit C, chloroplastic/mitochondrial, found in Ricinus communis (Castor bean).